Consider the following 33-residue polypeptide: U1-pseudomyrmecitoxin-Pt1 subunit LS2 (33 aa).

The protein belongs to the myrmexin family. Heterodimer composed of subunit LS2 and subunit SS1, heterodimer composed of subunit LS2 and SS2, and heterodimer composed of subunit LS2 and SS3; disulfide-linked. Expressed by the venom gland.

The protein localises to the secreted. In terms of biological role, this heterodimer may have anti-inflammatory properties, since the myrmexin complex (composed of 6 SS-LS heterodimers) inhibits carrageenin-induced edema in a dose-dependent manner (after subcutaneous injection into rats). The sequence is that of U1-pseudomyrmecitoxin-Pt1 subunit LS2 from Pseudomyrmex triplarinus (Ant).